Reading from the N-terminus, the 512-residue chain is Glutathione-binding protein GsiB (512 aa).

A signal peptide spans 1-26 (MTQFITHKWLAALGLASSIAAFPALA).

The protein belongs to the bacterial solute-binding protein 5 family. The complex is composed of two ATP-binding proteins (GsiA), two transmembrane proteins (GsiC and GsiD) and a solute-binding protein (GsiB).

The protein localises to the periplasm. Functionally, part of the ABC transporter complex GsiABCD involved in glutathione import. Binds glutathione. The protein is Glutathione-binding protein GsiB of Salmonella paratyphi A (strain ATCC 9150 / SARB42).